A 635-amino-acid chain; its full sequence is ATP-dependent zinc metalloprotease FtsH (635 aa).

Topologically, residues 1-4 (MVKN) are cytoplasmic. Residues 5 to 25 (LVLWVVVAVIMMTAYQSFNSS) traverse the membrane as a helical segment. At 26–97 (SVENSTDYTT…VEGTPFERRG (72 aa)) the chain is on the periplasmic side. Residues 98 to 118 (FLSQILISWFPMLFLVGVWVF) form a helical membrane-spanning segment. Residues 119–635 (FMRQMQGGGG…AVENTDDFNV (517 aa)) lie on the Cytoplasmic side of the membrane. Residue 191–198 (GPPGTGKT) participates in ATP binding. Zn(2+) is bound at residue His-413. The active site involves Glu-414. Positions 417 and 491 each coordinate Zn(2+). Residues 593 to 635 (NREPVTPPSGWGEPKTQQAAYANSTTNDTKPESAVENTDDFNV) form a disordered region. Polar residues predominate over residues 607-620 (KTQQAAYANSTTND).

In the central section; belongs to the AAA ATPase family. The protein in the C-terminal section; belongs to the peptidase M41 family. As to quaternary structure, homohexamer. Requires Zn(2+) as cofactor.

Its subcellular location is the cell inner membrane. Functionally, acts as a processive, ATP-dependent zinc metallopeptidase for both cytoplasmic and membrane proteins. Plays a role in the quality control of integral membrane proteins. The chain is ATP-dependent zinc metalloprotease FtsH from Haemophilus influenzae (strain ATCC 51907 / DSM 11121 / KW20 / Rd).